The sequence spans 495 residues: Putative FAD-containing monooxygenase MymA (495 aa).

FAD is bound by residues S15, E36, W45, 56 to 57 (DS), and V104.

It belongs to the FAD-binding monooxygenase family. FAD is required as a cofactor.

Required for maintaining the appropriate mycolic acid composition and permeability of the envelope on its exposure to acidic pH. The sequence is that of Putative FAD-containing monooxygenase MymA (mymA) from Mycobacterium tuberculosis (strain CDC 1551 / Oshkosh).